The chain runs to 320 residues: MKRIGILTSGGDAPGMNAAVRAVAGKAMAEGLEAYGINYGFAGLVAGDIHKIEAADLDGVIQRGGTLLYSARYPEFAHEEGQLKGIEQLKRFGIDALVVIGGDGSYHGALRLTEHGYNTIGLPGTIDNDIPYTDFTIGFDTAVNTNVQALDRIYDTAHSHDRTFVVEVMGRGAGDVALWSGVSIGATAIVVPEVDWDMEEIANKIKHNRANGHRSNLIVLAEGVMGAQEFVEKLSEYGDFDARGNTIAHMQRGGNPTAKDRVMASKMGAYAVELLLAGKGGLAVGIQNNQLVNHNILDLFESKHDVEVSLDKLNEEISFK.

Residues G11, 72–73 (RY), and 102–105 (GDGS) each bind ATP. D103 serves as a coordination point for Mg(2+). Residues 125-127 (TID), R162, 169-171 (MGR), E222, R243, and 249-252 (HMQR) each bind substrate. The active-site Proton acceptor is the D127.

It belongs to the phosphofructokinase type A (PFKA) family. ATP-dependent PFK group I subfamily. Prokaryotic clade 'B1' sub-subfamily. Homotetramer. Mg(2+) is required as a cofactor.

Its subcellular location is the cytoplasm. The enzyme catalyses beta-D-fructose 6-phosphate + ATP = beta-D-fructose 1,6-bisphosphate + ADP + H(+). It participates in carbohydrate degradation; glycolysis; D-glyceraldehyde 3-phosphate and glycerone phosphate from D-glucose: step 3/4. Allosterically activated by ADP and other diphosphonucleosides, and allosterically inhibited by phosphoenolpyruvate. Functionally, catalyzes the phosphorylation of D-fructose 6-phosphate to fructose 1,6-bisphosphate by ATP, the first committing step of glycolysis. The protein is ATP-dependent 6-phosphofructokinase of Lactiplantibacillus plantarum (strain ATCC BAA-793 / NCIMB 8826 / WCFS1) (Lactobacillus plantarum).